The following is a 216-amino-acid chain: ATP-dependent Clp protease proteolytic subunit (216 aa).

Ser103 functions as the Nucleophile in the catalytic mechanism. His128 is a catalytic residue. A disordered region spans residues 197–216 (RRPALPGDDAPRDVSEGPTP).

It belongs to the peptidase S14 family. In terms of assembly, fourteen ClpP subunits assemble into 2 heptameric rings which stack back to back to give a disk-like structure with a central cavity, resembling the structure of eukaryotic proteasomes.

The protein localises to the cytoplasm. The enzyme catalyses Hydrolysis of proteins to small peptides in the presence of ATP and magnesium. alpha-casein is the usual test substrate. In the absence of ATP, only oligopeptides shorter than five residues are hydrolyzed (such as succinyl-Leu-Tyr-|-NHMec, and Leu-Tyr-Leu-|-Tyr-Trp, in which cleavage of the -Tyr-|-Leu- and -Tyr-|-Trp bonds also occurs).. Its function is as follows. Cleaves peptides in various proteins in a process that requires ATP hydrolysis. Has a chymotrypsin-like activity. Plays a major role in the degradation of misfolded proteins. This chain is ATP-dependent Clp protease proteolytic subunit, found in Sphingopyxis alaskensis (strain DSM 13593 / LMG 18877 / RB2256) (Sphingomonas alaskensis).